Here is a 329-residue protein sequence, read N- to C-terminus: Beta-ketoacyl-[acyl-carrier-protein] synthase III (329 aa).

Active-site residues include cysteine 123 and histidine 256. The tract at residues 257 to 261 (QANIR) is ACP-binding. Residue asparagine 286 is part of the active site.

The protein belongs to the thiolase-like superfamily. FabH family. In terms of assembly, homodimer.

It is found in the cytoplasm. It carries out the reaction malonyl-[ACP] + acetyl-CoA + H(+) = 3-oxobutanoyl-[ACP] + CO2 + CoA. The protein operates within lipid metabolism; fatty acid biosynthesis. Catalyzes the condensation reaction of fatty acid synthesis by the addition to an acyl acceptor of two carbons from malonyl-ACP. Catalyzes the first condensation reaction which initiates fatty acid synthesis and may therefore play a role in governing the total rate of fatty acid production. Possesses both acetoacetyl-ACP synthase and acetyl transacylase activities. Its substrate specificity determines the biosynthesis of branched-chain and/or straight-chain of fatty acids. This is Beta-ketoacyl-[acyl-carrier-protein] synthase III from Burkholderia thailandensis (strain ATCC 700388 / DSM 13276 / CCUG 48851 / CIP 106301 / E264).